Here is a 236-residue protein sequence, read N- to C-terminus: Purine nucleoside phosphorylase CA_C1699 (236 aa).

Zn(2+)-binding residues include His62, Cys97, and His114.

Belongs to the purine nucleoside phosphorylase YfiH/LACC1 family. Homodimer. It depends on Cu(2+) as a cofactor. Zn(2+) serves as cofactor.

The enzyme catalyses adenosine + phosphate = alpha-D-ribose 1-phosphate + adenine. It catalyses the reaction S-methyl-5'-thioadenosine + phosphate = 5-(methylsulfanyl)-alpha-D-ribose 1-phosphate + adenine. It carries out the reaction inosine + phosphate = alpha-D-ribose 1-phosphate + hypoxanthine. The catalysed reaction is adenosine + H2O + H(+) = inosine + NH4(+). Purine nucleoside enzyme that catalyzes the phosphorolysis of adenosine and inosine nucleosides, yielding D-ribose 1-phosphate and the respective free bases, adenine and hypoxanthine. Also catalyzes the phosphorolysis of S-methyl-5'-thioadenosine into adenine and S-methyl-5-thio-alpha-D-ribose 1-phosphate. Also has adenosine deaminase activity. This is Purine nucleoside phosphorylase CA_C1699 from Clostridium acetobutylicum (strain ATCC 824 / DSM 792 / JCM 1419 / IAM 19013 / LMG 5710 / NBRC 13948 / NRRL B-527 / VKM B-1787 / 2291 / W).